A 311-amino-acid chain; its full sequence is Olfactory receptor 10G8 (311 aa).

The Extracellular segment spans residues 1-23; sequence MSNASLLTAFILMGLPHAPALDA. N-linked (GlcNAc...) asparagine glycosylation is present at asparagine 3. A helical transmembrane segment spans residues 24–44; the sequence is PLFGVFLVVYVLTVLGNLLIL. Residues 45 to 52 are Cytoplasmic-facing; sequence LVIRVDSH. Residues 53 to 73 form a helical membrane-spanning segment; the sequence is LHTTMYYFLTNLSFIDMWFST. The Extracellular portion of the chain corresponds to 74–98; the sequence is VTVPKLLMTLVFPSGRAISFHSCMA. A disulfide bond links cysteine 96 and cysteine 188. Residues 99–119 form a helical membrane-spanning segment; the sequence is QLYFFHFLGGTECFLYRVMSC. Residues 120-138 lie on the Cytoplasmic side of the membrane; that stretch reads DRYLAISYPLRYTSMMTGR. A helical transmembrane segment spans residues 139–159; sequence SCTLLATSTWLSGSLHSAVQA. Over 160-196 the chain is Extracellular; sequence ILTFHLPYCGPNWIQHYLCDAPPILKLACADTSAIET. The chain crosses the membrane as a helical span at residues 197 to 216; sequence VIFVTVGIVASGCFVLIVLS. At 217–236 the chain is on the cytoplasmic side; that stretch reads YVSIVCSILRIRTSEGKHRA. The chain crosses the membrane as a helical span at residues 237-257; sequence FQTCASHCIVVLCFFGPGLFI. The Extracellular portion of the chain corresponds to 258 to 268; that stretch reads YLRPGSRKAVD. A helical transmembrane segment spans residues 269–289; sequence GVVAVFYTVLTPLLNPVVYTL. Topologically, residues 290-311 are cytoplasmic; the sequence is RNKEVKKALLKLKDKVAHSQSK.

The protein belongs to the G-protein coupled receptor 1 family.

The protein localises to the cell membrane. Functionally, odorant receptor. This Homo sapiens (Human) protein is Olfactory receptor 10G8 (OR10G8).